We begin with the raw amino-acid sequence, 591 residues long: Eukaryotic translation initiation factor 3 subunit D (591 aa).

Residues 100-159 (SGGNPDEDAAFRLVDGKPPPRPKFGPKWRFNPHHNRNQLPQRRDEEVEAKKRDAEKERAR) are disordered. A compositionally biased stretch (basic residues) spans 123 to 135 (FGPKWRFNPHHNR). Over residues 140 to 159 (QRRDEEVEAKKRDAEKERAR) the composition is skewed to basic and acidic residues. Residues 309 to 323 (QLDLLSVHETSQEPL) form an RNA gate region. Acidic residues predominate over residues 549 to 560 (DYVEEPLPEDEQ). The tract at residues 549 to 591 (DYVEEPLPEDEQVQPTEENTEGAEASVAATKETEEKKADDAQA) is disordered. Positions 579-591 (KETEEKKADDAQA) are enriched in basic and acidic residues.

It belongs to the eIF-3 subunit D family. As to quaternary structure, component of the eukaryotic translation initiation factor 3 (eIF-3) complex, which is composed of at least 13 different subunits.

The protein localises to the cytoplasm. MRNA cap-binding component of the eukaryotic translation initiation factor 3 (eIF-3) complex, which is involved in protein synthesis of a specialized repertoire of mRNAs and, together with other initiation factors, stimulates binding of mRNA and methionyl-tRNAi to the 40S ribosome. The eIF-3 complex specifically targets and initiates translation of a subset of mRNAs involved in cell proliferation. In the eIF-3 complex, eif3d specifically recognizes and binds the 7-methylguanosine cap of a subset of mRNAs. In Arabidopsis thaliana (Mouse-ear cress), this protein is Eukaryotic translation initiation factor 3 subunit D (TIF3D1).